The primary structure comprises 193 residues: MKKLEERILRDGNVLGENILKVDSFLTHQVDFTLMKEIGQVFADIFHESGITKVVTIEASGIAPAVYTAEALGVPMIFAKKAKNITMTEGILTAEVYSFTKQVTSTVSIAGKFLSPSDKVLVIDDFLANGQAAKGLVEIIRQAGASVEAIGIVIEKSFQSGRKLLEDDGQRVVSLARIEKFENGKVVFGKADA.

Xanthine contacts are provided by Leu-20 and Thr-27. Residue 128–132 (ANGQA) participates in 5-phospho-alpha-D-ribose 1-diphosphate binding. Lys-156 is a xanthine binding site.

It belongs to the purine/pyrimidine phosphoribosyltransferase family. Xpt subfamily. In terms of assembly, homodimer.

Its subcellular location is the cytoplasm. The enzyme catalyses XMP + diphosphate = xanthine + 5-phospho-alpha-D-ribose 1-diphosphate. Its pathway is purine metabolism; XMP biosynthesis via salvage pathway; XMP from xanthine: step 1/1. Functionally, converts the preformed base xanthine, a product of nucleic acid breakdown, to xanthosine 5'-monophosphate (XMP), so it can be reused for RNA or DNA synthesis. In Streptococcus gordonii (strain Challis / ATCC 35105 / BCRC 15272 / CH1 / DL1 / V288), this protein is Xanthine phosphoribosyltransferase.